A 180-amino-acid chain; its full sequence is GTP cyclohydrolase 1 (180 aa).

Residues cysteine 71, histidine 74, and cysteine 142 each contribute to the Zn(2+) site.

This sequence belongs to the GTP cyclohydrolase I family. Toroid-shaped homodecamer, composed of two pentamers of five dimers.

It catalyses the reaction GTP + H2O = 7,8-dihydroneopterin 3'-triphosphate + formate + H(+). Its pathway is cofactor biosynthesis; 7,8-dihydroneopterin triphosphate biosynthesis; 7,8-dihydroneopterin triphosphate from GTP: step 1/1. This is GTP cyclohydrolase 1 (folE) from Helicobacter pylori (strain J99 / ATCC 700824) (Campylobacter pylori J99).